Reading from the N-terminus, the 438-residue chain is MKETPLSNCERRFLLRAIEEKKRLDGRQTYDYRNIRISFGTDYGCCIVELGKTRVLGQVSCELVSPKLNRATEGILFFNLELSQMAAPAFEPGRQSDLLVKLNRLLERCLRNSKCIDTESLCVVAGEKVWQIRVDLHLLNHDGNIIDAASIAAIVALCHFRRPDVSVQGEEVTLYTPEERDPVPLSIHHMPICVSFAFFQQGTYLLVDPNEREERVMDGLLVIAMNKHREICTIQSSGGIMLLKDQVFRCSKIAGVKVAEITELIQKALENDQRVRKEGGKFGFAESIANQRITAFKMETAPIDTSNIEERAEEIIAEAEPPPEVVSQPVLWTPGTAQIGDGIENSWGDLEDSEKEEEEEEGGIDEAVILDDTKMDTGEVSDIGSQGAPIVLSDSEEEEMIILEPEKNPKKIRAQTSANQKAPSKGQGKRKKKKRTAN.

S65 carries the phosphoserine modification. K297 bears the N6-acetyllysine; alternate mark. A Glycyl lysine isopeptide (Lys-Gly) (interchain with G-Cter in SUMO1); alternate cross-link involves residue K297. A Glycyl lysine isopeptide (Lys-Gly) (interchain with G-Cter in SUMO2); alternate cross-link involves residue K297. Residues S306 and S346 each carry the phosphoserine modification. Disordered stretches follow at residues 337–365 (AQIG…GGID) and 377–438 (TGEV…RTAN). A compositionally biased stretch (acidic residues) spans 349–364 (DLEDSEKEEEEEEGGI). Phosphoserine is present on residues S393 and S395. Basic residues predominate over residues 427-438 (QGKRKKKKRTAN).

Belongs to the RNase PH family. In terms of assembly, component of the RNA exosome core complex (Exo-9), composed of EXOSC1, EXOSC2, EXOSC3, EXOSC4, EXOSC5, EXOSC6, EXOSC7, EXOSC8 and EXOSC9; within the complex interacts with EXOSC3, EXOSC4, EXOSC5 and DIS3. The catalytically inactive RNA exosome core complex (Exo-9) associates with the catalytic subunit EXOSC10/RRP6. Exo-9 may associate with DIS3 to form the nucleolar exosome complex, or DIS3L to form the cytoplasmic exosome complex. Exo-9 is formed by a hexameric base ring consisting of the heterodimers EXOSC4-EXOSC9, EXOSC5-EXOSC8 and EXOSC6-EXOSC7, and a cap ring consisting of EXOSC1, EXOSC2 and EXOSC3. The RNA exosome complex associates with cofactors C1D/RRP47, MPHOSPH6/MPP6 and MTREX/MTR4. Interacts (via C-terminus region) with SETX (via N-terminus domain); the interaction enhances SETX sumoylation. Interacts with DIS3; the interaction is direct.

The protein localises to the cytoplasm. The protein resides in the nucleus. Its subcellular location is the nucleolus. It is found in the nucleoplasm. In terms of biological role, non-catalytic component of the RNA exosome complex which has 3'-&gt;5' exoribonuclease activity and participates in a multitude of cellular RNA processing and degradation events. In the nucleus, the RNA exosome complex is involved in proper maturation of stable RNA species such as rRNA, snRNA and snoRNA, in the elimination of RNA processing by-products and non-coding 'pervasive' transcripts, such as antisense RNA species and promoter-upstream transcripts (PROMPTs), and of mRNAs with processing defects, thereby limiting or excluding their export to the cytoplasm. The RNA exosome may be involved in Ig class switch recombination (CSR) and/or Ig variable region somatic hypermutation (SHM) by targeting AICDA deamination activity to transcribed dsDNA substrates. In the cytoplasm, the RNA exosome complex is involved in general mRNA turnover and specifically degrades inherently unstable mRNAs containing AU-rich elements (AREs) within their 3' untranslated regions, and in RNA surveillance pathways, preventing translation of aberrant mRNAs. It seems to be involved in degradation of histone mRNA. The catalytic inactive RNA exosome core complex of 9 subunits (Exo-9) is proposed to play a pivotal role in the binding and presentation of RNA for ribonucleolysis, and to serve as a scaffold for the association with catalytic subunits and accessory proteins or complexes. EXOSC9 binds to ARE-containing RNAs. This Mus musculus (Mouse) protein is Exosome complex component RRP45 (Exosc9).